A 422-amino-acid polypeptide reads, in one-letter code: Sphingomyelin phosphodiesterase 2 (422 aa).

A Mg(2+)-binding site is contributed by glutamate 49. The active-site Proton acceptor is the histidine 272. 2 helical membrane passes run 325 to 345 and 354 to 374; these read ALFG…CVLA and AIML…VYLF. The interval 397–422 is disordered; it reads TETQDLGSEPHPTHCRQQEADRAEEK. Positions 412–422 are enriched in basic and acidic residues; sequence RQQEADRAEEK.

It belongs to the neutral sphingomyelinase family. The cofactor is Mg(2+).

The protein localises to the membrane. The enzyme catalyses a sphingomyelin + H2O = phosphocholine + an N-acylsphing-4-enine + H(+). It carries out the reaction 1-O-octadecyl-sn-glycero-3-phosphocholine + H2O = 1-O-octadecyl-sn-glycerol + phosphocholine + H(+). It catalyses the reaction an N-(acyl)-sphingosylphosphocholine + H2O = an N-acyl-sphingoid base + phosphocholine + H(+). The catalysed reaction is 1-hexadecanoyl-sn-glycero-3-phosphocholine + H2O = 1-hexadecanoyl-sn-glycerol + phosphocholine + H(+). The enzyme catalyses a sphingosylphosphocholine + H2O = a sphingoid base + phosphocholine + H(+). It carries out the reaction 1-O-hexadecyl-sn-glycero-3-phosphocholine + H2O = 1-O-hexadecyl-sn-glycerol + phosphocholine + H(+). It participates in lipid metabolism; sphingolipid metabolism. Its function is as follows. Catalyzes the hydrolysis of sphingomyelin to form ceramide and phosphocholine. Ceramide mediates numerous cellular functions, such as apoptosis and growth arrest, and is capable of regulating these 2 cellular events independently. Also hydrolyzes sphingosylphosphocholine. Hydrolyze 1-acyl-2-lyso-sn-glycero-3-phosphocholine (lyso-PC) and 1-O-alkyl-2-lyso-sn-glycero-3-phosphocholine (lyso-platelet-activating factor). The protein is Sphingomyelin phosphodiesterase 2 (Smpd2) of Rattus norvegicus (Rat).